Reading from the N-terminus, the 3303-residue chain is Protein unc-80 homolog (3303 aa).

The segment covering 1-37 (MVTNAAGTAATGGATSNTTNNNNLQTNNNSHGANNNN) has biased composition (low complexity). Positions 1-43 (MVTNAAGTAATGGATSNTTNNNNLQTNNNSHGANNNNDDFDFD) are disordered. The chain crosses the membrane as a helical span at residues 202–222 (LFSVPTITLFVYLFAPIIHHL). Disordered stretches follow at residues 284-316 (LSAD…VSSP), 361-422 (LQQQ…SESI), 491-512 (LYQG…KDYI), 526-546 (AEEP…KKKR), 1036-1067 (FRRR…SERN), 1443-1563 (LHEP…DDTA), and 1627-1671 (VEPT…KDRI). The span at 361 to 377 (LQQQQSQSRRGSRQSMN) shows a compositional bias: low complexity. Basic and acidic residues-rich tracts occupy residues 378 to 391 (SRDK…KFEF) and 401 to 422 (SMKE…SESI). Polar residues predominate over residues 495 to 505 (PGSNSRDSPGS). The span at 1058 to 1067 (SDSTSSSERN) shows a compositional bias: polar residues. The segment covering 1490-1499 (FKRRSLKLRR) has biased composition (basic residues). Positions 1546–1556 (DDQQPESPTDS) are enriched in polar residues. Residues 1660–1671 (KRKDSLSRKDRI) are compositionally biased toward basic and acidic residues. 3 consecutive transmembrane segments (helical) span residues 1969–1989 (VYEI…ALFL), 2018–2038 (LPQQ…MFYV), and 2048–2068 (LVGS…GIMF). Disordered stretches follow at residues 2518 to 2550 (NGPY…FEEE), 3003 to 3158 (EEKR…FKAQ), and 3170 to 3262 (FRHS…YRDN). A compositionally biased stretch (basic and acidic residues) spans 3003 to 3018 (EEKRYDRESSEQKKSD). Polar residues-rich tracts occupy residues 3033–3053 (QRPS…SHSH) and 3071–3106 (PSDT…SQSG). Residues 3124–3134 (SGHGSGGGIGT) are compositionally biased toward gly residues. The span at 3135–3152 (GAASAVPSHLSHSQSLQQ) shows a compositional bias: low complexity. Residues 3198–3217 (SRLQRSKAASRKTFRLKRSR) show a composition bias toward basic residues. Polar residues predominate over residues 3226–3239 (IVTSQEEQAPQAQA). The segment covering 3246-3257 (SWDSVSQTSSTS) has biased composition (low complexity).

This sequence belongs to the unc-80 family. In terms of assembly, interacts with unc79 and na. Can interact with unc79 independently of na.

The protein resides in the membrane. In terms of biological role, component of the na (narrow abdomen) sodium channel complex. In the circadian clock neurons it functions with na and unc79 to promote circadian rhythmicity. This Drosophila melanogaster (Fruit fly) protein is Protein unc-80 homolog.